Consider the following 541-residue polypeptide: Probable inorganic phosphate transporter 1-8 (541 aa).

Residues 1–28 (MARQEQQQHLQVLSALDAAKTQWYHFTA) lie on the Cytoplasmic side of the membrane. A helical transmembrane segment spans residues 29–49 (IVVAGMGFFTDAYDLFCISLV). Residues 50–74 (TKLLGRIYYTDLAKENPGSLPPNVA) are Extracellular-facing. Residues 75-95 (AAVNGVAFCGTLAGQLFFGWL) form a helical membrane-spanning segment. Residues 96–102 (GDKLGRK) are Cytoplasmic-facing. Residues 103–123 (SVYGMTLLMMVICSIASGLSF) form a helical membrane-spanning segment. Residues 124–126 (SHT) are Extracellular-facing. The helical transmembrane segment at 127-147 (PTSVMATLCFFRFWLGFGIGG) threads the bilayer. Residues 148–168 (DYPLSATIMSEYANKKTRGAF) lie on the Cytoplasmic side of the membrane. Residues 169-189 (IAAVFAMQGFGILAGGIVTLI) traverse the membrane as a helical segment. The Extracellular portion of the chain corresponds to 190–215 (ISSAFRAGFPAPAYQDDRAGSTVRQA). Residues 216-236 (DYVWRIILMLGAMPALLTYYW) form a helical membrane-spanning segment. Over 237 to 297 (RMKMPETARY…GLFSRQFARR (61 aa)) the chain is Cytoplasmic. A helical membrane pass occupies residues 298-318 (HGLHLVGTATTWFLLDIAFYS). Residues 319–353 (QNLFQKDIFTSINWIPKAKTMSALEEVFRIARAQT) are Extracellular-facing. The helical transmembrane segment at 354–374 (LIALCGTVPGYWFTVFLIDIV) threads the bilayer. The Cytoplasmic segment spans residues 375–376 (GR). Residues 377 to 397 (FAIQLLGFFMMTVFMLGLAVP) form a helical membrane-spanning segment. The Extracellular portion of the chain corresponds to 398-404 (YHHWTTK). The helical transmembrane segment at 405–425 (GNHIGFVVMYAFTFFFANFGP) threads the bilayer. At 426–447 (NSTTFIVPAEIFPARLRSTCHG) the chain is on the cytoplasmic side. The helical transmembrane segment at 448 to 468 (ISAAAGKAGAIIGSFGFLYAA) threads the bilayer. Residues 469–486 (QDPHKPDAGYKPGIGVRN) lie on the Extracellular side of the membrane. The helical transmembrane segment at 487–507 (SLFVLAGCNLLGFICTFLVPE) threads the bilayer. The Cytoplasmic segment spans residues 508–541 (SKGKSLEEMSGEAEDDDDEVAAAGGGAAVRPQTA). The segment at 514 to 541 (EEMSGEAEDDDDEVAAAGGGAAVRPQTA) is disordered. The span at 516–527 (MSGEAEDDDDEV) shows a compositional bias: acidic residues.

This sequence belongs to the major facilitator superfamily. Phosphate:H(+) symporter (TC 2.A.1.9) family.

The protein resides in the membrane. Functionally, high-affinity transporter for external inorganic phosphate. This is Probable inorganic phosphate transporter 1-8 (PHT1-8) from Oryza sativa subsp. japonica (Rice).